The following is a 580-amino-acid chain: Micronemal protein 4 (580 aa).

Positions 1–25 are cleaved as a signal peptide; the sequence is MRASLPVHLVVCTQLSAVWFGVAKA. Apple domains lie at 68–137, 141–214, 232–301, 305–375, 419–488, and 492–565; these read CVHS…SRSC, CFEQ…KQFC, CIQL…PKSC, CFSN…VTVG, CVHT…SRTC, and CLRR…YTFC. Cystine bridges form between C68–C137, C93–C115, C97–C103, C141–C214, C166–C188, C170–C176, C232–C301, C257–C279, C261–C267, C305–C380, C332–C354, C336–C342, C419–C488, C444–C466, and C448–C454.

Monomer. Part of the MIC6-MIC1-MIC4 complex. Interacts (via the second apple domain) directly with MIC1 (via the beta-finger region). Interacts with murine TLR2; the interaction promotes activation of bone marrow-derived dendritic cells and macrophages in the host. Interacts with murine TLR4; the interaction promotes activation of bone marrow-derived dendritic cells and macrophages in the host. In terms of processing, proteolytically cleaved at the N- and C-terminus after release from the microneme.

It localises to the cytoplasmic vesicle. The protein localises to the secretory vesicle. Its subcellular location is the microneme. It is found in the host early endosome. With respect to regulation, lacto-N-biose inhibits binding to asialofetuin, a host glycoprotein. Functionally, soluble adhesin with carbohydrate-binding activity. Binds to galactose-terminating oligosaccharides. Required for attachment of the parasite to the host cell prior to invasion. Triggers the activation of murine bone marrow-derived dendritic cells and macrophages and production of pro-inflammatory cytokines, such as IL12 (IL12B/IL12A), in host TLR2/TLR4-dependent manner. Triggers the production of anti-inflammatory cytokine IL10 in murine bone marrow-derived macrophages in host TLR4-dependent manner. Induces transient endotoxin tolerance in murine bone marrow-derived macrophages, manifested by reduced TNF-alpha (TNF) production in response to challenge with lipopolysaccharides (LPS). The chain is Micronemal protein 4 from Toxoplasma gondii.